Consider the following 341-residue polypeptide: Glucokinase (341 aa).

18 to 23 (GDIGGT) contributes to the ATP binding site.

It belongs to the bacterial glucokinase family.

It is found in the cytoplasm. It catalyses the reaction D-glucose + ATP = D-glucose 6-phosphate + ADP + H(+). The protein is Glucokinase of Rhizobium etli (strain CIAT 652).